A 101-amino-acid polypeptide reads, in one-letter code: Large ribosomal subunit protein bL9m (101 aa).

A mitochondrion-targeting transit peptide spans 1-32 (MSIMKPTTRFFRFNSLELAVSPFQRIYGQLRF).

This sequence belongs to the bacterial ribosomal protein bL9 family. Component of the mitochondrial large ribosomal subunit (mt-LSU). Mature yeast 74S mitochondrial ribosomes consist of a small (37S) and a large (54S) subunit. The 37S small subunit contains a 15S ribosomal RNA (15S mt-rRNA) and at least 32 different proteins. The 54S large subunit contains a 21S rRNA (21S mt-rRNA) and at least 45 different proteins.

It is found in the mitochondrion. Functionally, component of the mitochondrial ribosome (mitoribosome), a dedicated translation machinery responsible for the synthesis of mitochondrial genome-encoded proteins, including at least some of the essential transmembrane subunits of the mitochondrial respiratory chain. The mitoribosomes are attached to the mitochondrial inner membrane and translation products are cotranslationally integrated into the membrane. The sequence is that of Large ribosomal subunit protein bL9m from Schizosaccharomyces pombe (strain 972 / ATCC 24843) (Fission yeast).